Reading from the N-terminus, the 951-residue chain is Leucine-rich repeat-containing G-protein coupled receptor 4 (951 aa).

The first 19 residues, 1-19, serve as a signal peptide directing secretion; sequence MPGPLGLLCFLALGLRGSA. Residues 20–544 lie on the Extracellular side of the membrane; it reads EPSGAAPPLC…LLGSWMIRLT (525 aa). The region spanning 25–57 is the LRRNT domain; sequence APPLCAAPCSCDGDRRVDCSGKGLTAVPEGLSA. Cystine bridges form between cysteine 29–cysteine 35 and cysteine 33–cysteine 43. 11 LRR repeats span residues 35–58, 59–79, 81–103, 104–127, 128–151, 153–175, 176–199, 201–223, 224–247, 248–270, and 272–294; these read CDGD…LSAF, TQLL…AFKN, PFLE…ALSG, LKEL…AIRG, LSSL…SFEG, TQLR…PLSN, LPTL…AFTN, SSLV…CFDG, LDNL…IKAL, PSLK…AFDG, and PLLK…AFHN. Asparagine 68 is a glycosylation site (N-linked (GlcNAc...) asparagine). An N-linked (GlcNAc...) asparagine glycan is attached at asparagine 199. 2 N-linked (GlcNAc...) asparagine glycosylation sites follow: asparagine 294 and asparagine 314. 5 LRR repeats span residues 318–341, 342–363, 364–387, 388–411, and 413–435; these read TVRL…LCQE, QKRL…SFNG, CHAL…TFQG, LTSL…AFAK, and GSIT…GLNG. A disulfide bridge connects residues cysteine 339 and cysteine 364. Intrachain disulfides connect cysteine 470/cysteine 522 and cysteine 471/cysteine 476. A helical membrane pass occupies residues 545–565; that stretch reads VWFIFLVALFFNLLVILTTFA. The Cytoplasmic portion of the chain corresponds to 566–575; sequence SCTSVPSSKL. A helical transmembrane segment spans residues 576–596; sequence FIGLISVSNLFMGAYTGILTF. Over 597-619 the chain is Extracellular; that stretch reads LDAVSWGRFAEFGIWWEIGSGCK. Cysteine 618 and cysteine 693 form a disulfide bridge. Residues 620–640 form a helical membrane-spanning segment; sequence IAGFLAVFSSESAIFLLMLAA. The Cytoplasmic portion of the chain corresponds to 641-661; it reads VERSLSAKDMMKNGKSNHLRQ. Residues 662-682 traverse the membrane as a helical segment; that stretch reads FRIAALLAFLGAAVAGSFPLF. Residues 683-703 lie on the Extracellular side of the membrane; it reads HRGEYSASPLCLPFPTGETPS. The helical transmembrane segment at 704-724 threads the bilayer; sequence LGFTVTLVLLNSLAFLLMAII. Over 725–756 the chain is Cytoplasmic; the sequence is YTKLYCNLEKEDLSESSQSSMIKHVAWLIFTN. The chain crosses the membrane as a helical span at residues 757–777; that stretch reads CIFFCPVAFFSFAPLITAVSI. At 778–783 the chain is on the extracellular side; sequence SPEIMK. The chain crosses the membrane as a helical span at residues 784-804; sequence SVTLIFFPLPACLNPVLYVFF. Residues 805-951 lie on the Cytoplasmic side of the membrane; it reads NPKFKEDWKL…YAYNLPRVKD (147 aa). Phosphoserine is present on serine 920.

The protein belongs to the G-protein coupled receptor 1 family.

The protein resides in the cell membrane. Functionally, receptor for R-spondins that potentiates the canonical Wnt signaling pathway and is involved in the formation of various organs. Upon binding to R-spondins (RSPO1, RSPO2, RSPO3 or RSPO4), associates with phosphorylated LRP6 and frizzled receptors that are activated by extracellular Wnt receptors, triggering the canonical Wnt signaling pathway to increase expression of target genes. In contrast to classical G-protein coupled receptors, does not activate heterotrimeric G-proteins to transduce the signal. Its function as activator of the Wnt signaling pathway is required for the development of various organs, including liver, kidney, intestine, bone, reproductive tract and eye. May also act as a receptor for norrin (NDP), such results however required additional confirmation in vivo. Required during spermatogenesis to activate the Wnt signaling pathway in peritubular myoid cells. Required for the maintenance of intestinal stem cells and Paneth cell differentiation in postnatal intestinal crypts. Acts as a regulator of bone formation and remodeling. Involved in kidney development; required for maintaining the ureteric bud in an undifferentiated state. Involved in the development of the anterior segment of the eye. Required during erythropoiesis. Also acts as a negative regulator of innate immunity by inhibiting TLR2/TLR4 associated pattern-recognition and pro-inflammatory cytokine production. Plays an important role in regulating the circadian rhythms of plasma lipids, partially through regulating the rhythmic expression of MTTP. Required for proper development of GnRH neurons (gonadotropin-releasing hormone expressing neurons) that control the release of reproductive hormones from the pituitary gland. The chain is Leucine-rich repeat-containing G-protein coupled receptor 4 (LGR4) from Bos taurus (Bovine).